Consider the following 788-residue polypeptide: Calpastatin (788 aa).

Residues 1-11 (MSQPGPKPAAS) are compositionally biased toward pro residues. 3 disordered regions span residues 1-262 (MSQP…TGPV), 289-493 (LLEK…MCSI), and 514-580 (TLAG…SQEQ). Ser-11 carries the post-translational modification Phosphoserine. The span at 12–21 (PRPSRGAAAR) shows a compositional bias: low complexity. Over residues 38 to 49 (PGEKKGSDEKKA) the composition is skewed to basic and acidic residues. Over residues 65 to 87 (AATATKVTASSAATSKSPSMSTT) the composition is skewed to low complexity. A compositionally biased stretch (basic and acidic residues) spans 99–119 (EGPDQKRPREQAVKTESKKPQ). Lys-112 is covalently cross-linked (Glycyl lysine isopeptide (Lys-Gly) (interchain with G-Cter in SUMO2)). An N6-acetyllysine modification is found at Lys-129. Ser-165 is subject to Phosphoserine. Thr-216 carries the phosphothreonine modification. At Ser-219 the chain carries Phosphoserine. Basic and acidic residues predominate over residues 246–256 (GGHEDTNRDDP). One copy of the Inhibitory domain 1 repeat lies at 251 to 303 (TNRDDPPYTGPVVLDPMYSTYLEALGIKEGTIPPEYRKLLEKNEGITQPLPDS). Phosphoserine is present on residues Ser-303 and Ser-324. Polar residues-rich tracts occupy residues 318–328 (SDFTCSSPTGK) and 369–380 (QALQALSDSLGT). Residues 384-436 (DPPSHVSQAEQVKEAKAKEERQEKCGEDEDTVPAEYRLKPAKDKDGKPLLPEP) form an Inhibitory domain 2 repeat. Composition is skewed to basic and acidic residues over residues 394–408 (QVKE…QEKC) and 419–430 (YRLKPAKDKDGK). The span at 441 to 453 (KSLSESELIGELS) shows a compositional bias: low complexity. 3 positions are modified to phosphoserine: Ser-444, Ser-446, and Ser-453. Thr-479 bears the Phosphothreonine mark. Residue Ser-518 is modified to Phosphoserine. Over residues 522 to 570 (READPEHEKTVEDKVKEKAKEEEHEKLGEKEETVPPDYRLEEVKDKDGK) the composition is skewed to basic and acidic residues. The stretch at 524-577 (ADPEHEKTVEDKVKEKAKEEEHEKLGEKEETVPPDYRLEEVKDKDGKPLLPKES) is one Inhibitory domain 3 repeat. 4 positions are modified to phosphoserine: Ser-594, Ser-605, Ser-653, and Ser-655. Residues 620 to 788 (VVSQTPAPST…PKAKEDARHS (169 aa)) are disordered. The Inhibitory domain 4 repeat unit spans residues 661 to 714 (PDPDENKPLDDKVKEKIKPEHSEKLGERDDTIPPEYRHLLDNDGKDKPEKPPTK). Composition is skewed to basic and acidic residues over residues 661–726 (PDPD…RDPI) and 759–788 (ASKD…ARHS).

This sequence belongs to the protease inhibitor I27 (calpastatin) family. Isoform 2 is the major form in all tissues examined. Isoform 1 accounts for 5-10% in tissues such as skeletal muscle, liver and brain, and 30% in myoblasts. Isoforms 4 and 5 are testis-specific. Isoform 6 is highly expressed in heart and skeletal muscle with lower levels in liver, brain and testis. Isoform 7 is expressed at high levels in liver.

In terms of biological role, specific inhibition of calpain (calcium-dependent cysteine protease). Plays a key role in postmortem tenderization of meat and have been proposed to be involved in muscle protein degradation in living tissue. The polypeptide is Calpastatin (Cast) (Mus musculus (Mouse)).